The primary structure comprises 93 residues: U12-lycotoxin-Ls1e (93 aa).

The signal sequence occupies residues 1–18 (MKFAVILLFTLVVLAVAS). Positions 19-38 (ESVEEDTREIDVEEFQEQQR) are excised as a propeptide.

It belongs to the neurotoxin 31 family. In terms of processing, contains 5 disulfide bonds. As to expression, expressed by the venom gland.

The protein resides in the secreted. The polypeptide is U12-lycotoxin-Ls1e (Lycosa singoriensis (Wolf spider)).